The sequence spans 506 residues: NADH-quinone oxidoreductase subunit N 2 (506 aa).

Transmembrane regions (helical) follow at residues 11–31 (SLAY…LVVW), 44–64 (LVIL…YFLA), 82–102 (FSNL…LFLV), 117–137 (SGEL…MAAS), 140–160 (LLLI…LAGF), 175–195 (VIFG…IFGI), 222–242 (VFVG…AAPF), 254–274 (PTPV…AVLI), 289–309 (GVAT…MTVG), 323–345 (LAYS…SGAG), 356–376 (YCFM…ESGG), 394–414 (AAAM…AGFI), 419–439 (LFSA…VVGV), and 472–492 (LLGG…VYWG).

It belongs to the complex I subunit 2 family. In terms of assembly, NDH-1 is composed of 14 different subunits. Subunits NuoA, H, J, K, L, M, N constitute the membrane sector of the complex.

The protein localises to the cell inner membrane. It catalyses the reaction a quinone + NADH + 5 H(+)(in) = a quinol + NAD(+) + 4 H(+)(out). NDH-1 shuttles electrons from NADH, via FMN and iron-sulfur (Fe-S) centers, to quinones in the respiratory chain. The immediate electron acceptor for the enzyme in this species is believed to be ubiquinone. Couples the redox reaction to proton translocation (for every two electrons transferred, four hydrogen ions are translocated across the cytoplasmic membrane), and thus conserves the redox energy in a proton gradient. The protein is NADH-quinone oxidoreductase subunit N 2 of Sorangium cellulosum (strain So ce56) (Polyangium cellulosum (strain So ce56)).